A 583-amino-acid polypeptide reads, in one-letter code: CD166 antigen (583 aa).

A signal peptide spans 1–27 (MASKAAPSCRLVFCLLISATVLRPGLG). Ig-like V-type domains lie at 28–120 (WYTV…TEDD) and 125–234 (PTVV…KTVY). At 28-527 (WYTVNSAYGD…NKEKVNDQAK (500 aa)) the chain is on the extracellular side. 2 disulfides stabilise this stretch: cysteine 43/cysteine 113 and cysteine 157/cysteine 220. Residues asparagine 91, asparagine 95, asparagine 167, asparagine 265, asparagine 306, asparagine 361, asparagine 457, asparagine 480, and asparagine 499 are each glycosylated (N-linked (GlcNAc...) asparagine). Ig-like C2-type domains follow at residues 245–328 (PTEQ…AAIT), 333–409 (DLSL…ESLT), and 416–501 (PQIK…LNVS). Disulfide bonds link cysteine 270-cysteine 313, cysteine 354-cysteine 392, and cysteine 435-cysteine 485. Residues 528–549 (LIVGIVVGLLLAALVAGVVYWL) form a helical membrane-spanning segment. Residues 550–583 (YMKKSKTASKHVNKDLGNMEENKKLEENNHKTEA) lie on the Cytoplasmic side of the membrane. A disordered region spans residues 562–583 (NKDLGNMEENKKLEENNHKTEA). Residues 569–583 (EENKKLEENNHKTEA) are compositionally biased toward basic and acidic residues.

In terms of assembly, homodimer. Interacts (via extracellular domain) with CD6 (via extracellular domain). Homodimerization and interaction with CD6 involve the same region and cannot occur simultaneously. The affinity for CD6 is much higher than the affinity for self-association. Interacts (via glycosylated extracellular domain) with LGALS1 and LGALS3. Interaction with LGALS1 or LGALS3 inhibits interaction with CD6. Post-translationally, glycosylated. In terms of tissue distribution, constitutively expressed in the autonomic nervous system. Sympathetic and parasympathetic nerve fibers but not myelinated nerve fibers in the spinal nerve.

It localises to the cell membrane. The protein resides in the cell projection. The protein localises to the axon. Its subcellular location is the dendrite. In terms of biological role, cell adhesion molecule that mediates both heterotypic cell-cell contacts via its interaction with CD6, as well as homotypic cell-cell contacts. Promotes T-cell activation and proliferation via its interactions with CD6. Contributes to the formation and maturation of the immunological synapse via its interactions with CD6. Mediates homotypic interactions with cells that express ALCAM. Mediates attachment of dendritic cells onto endothelial cells via homotypic interaction. Inhibits endothelial cell migration and promotes endothelial tube formation via homotypic interactions. Required for normal organization of the lymph vessel network. Required for normal hematopoietic stem cell engraftment in the bone marrow. Plays a role in hematopoiesis; required for normal numbers of hematopoietic stem cells in bone marrow. Promotes in vitro osteoblast proliferation and differentiation. Promotes neurite extension, axon growth and axon guidance; axons grow preferentially on surfaces that contain ALCAM. Mediates outgrowth and pathfinding for retinal ganglion cell axons. The chain is CD166 antigen (ALCAM) from Bos taurus (Bovine).